A 368-amino-acid polypeptide reads, in one-letter code: 2-aminoethylphosphonate--pyruvate transaminase (368 aa).

An N6-(pyridoxal phosphate)lysine modification is found at lysine 192.

It belongs to the class-V pyridoxal-phosphate-dependent aminotransferase family. PhnW subfamily. In terms of assembly, homodimer. Requires pyridoxal 5'-phosphate as cofactor.

The enzyme catalyses (2-aminoethyl)phosphonate + pyruvate = phosphonoacetaldehyde + L-alanine. Involved in phosphonate degradation. In Pseudomonas putida (strain ATCC 700007 / DSM 6899 / JCM 31910 / BCRC 17059 / LMG 24140 / F1), this protein is 2-aminoethylphosphonate--pyruvate transaminase.